Consider the following 424-residue polypeptide: Synaptotagmin-1 (424 aa).

At 1 to 60 (MVSESHHEALAAPPATTVAAALPSNVTEPAAPGGGGGKEDAFSNLKKKFMNELNKIPLPP) the chain is on the vesicular side. N-linked (GlcNAc...) asparagine glycosylation is present at Asn-25. A helical membrane pass occupies residues 61–82 (WALIAIAIVAVLLILTCCFCLC). S-palmitoyl cysteine attachment occurs at residues Cys-77, Cys-78, Cys-80, Cys-82, and Cys-85. The Cytoplasmic segment spans residues 83–424 (KKCLFKKKNK…EVDAMLAVKK (342 aa)). Positions 117–142 (KDQALKDDDAETGLTDGEEKEEPKEV) are disordered. Over residues 124-136 (DDAETGLTDGEEK) the composition is skewed to acidic residues. A phospholipid binding region spans residues 138 to 384 (EPKEVEKLGK…AIGKVFVGYN (247 aa)). 2 C2 domains span residues 144 to 263 (KLGK…EEWR) and 275 to 408 (KLGD…AQWH). Ca(2+)-binding residues include Leu-174, Asp-175, Asp-181, Asp-233, Phe-234, Asp-235, Ser-238, Lys-239, Asp-241, Asp-306, Asp-312, Asp-366, Asp-368, and Asp-374.

It belongs to the synaptotagmin family. In terms of assembly, homotetramer. It depends on Ca(2+) as a cofactor.

Its subcellular location is the cytoplasmic vesicle. It is found in the secretory vesicle membrane. It localises to the secretory vesicle. The protein localises to the synaptic vesicle membrane. The protein resides in the chromaffin granule membrane. Its subcellular location is the cytoplasm. In terms of biological role, calcium sensor that participates in triggering neurotransmitter release at the synapse. May have a regulatory role in the membrane interactions during trafficking of synaptic vesicles at the active zone of the synapse. It binds acidic phospholipids with a specificity that requires the presence of both an acidic head group and a diacyl backbone. May play a role in dendrite formation by melanocytes. This is Synaptotagmin-1 (SYT1) from Gallus gallus (Chicken).